We begin with the raw amino-acid sequence, 666 residues long: tRNA 5-methylaminomethyl-2-thiouridine biosynthesis bifunctional protein MnmC (666 aa).

Positions 1–253 (MSSPFVPIIT…KRHMICAHYE (253 aa)) are tRNA (mnm(5)s(2)U34)-methyltransferase. The segment at 283-666 (VGGGLAGCFI…FLRKKIIQGP (384 aa)) is FAD-dependent cmnm(5)s(2)U34 oxidoreductase.

This sequence in the N-terminal section; belongs to the methyltransferase superfamily. tRNA (mnm(5)s(2)U34)-methyltransferase family. It in the C-terminal section; belongs to the DAO family. Requires FAD as cofactor.

It is found in the cytoplasm. It catalyses the reaction 5-aminomethyl-2-thiouridine(34) in tRNA + S-adenosyl-L-methionine = 5-methylaminomethyl-2-thiouridine(34) in tRNA + S-adenosyl-L-homocysteine + H(+). Catalyzes the last two steps in the biosynthesis of 5-methylaminomethyl-2-thiouridine (mnm(5)s(2)U) at the wobble position (U34) in tRNA. Catalyzes the FAD-dependent demodification of cmnm(5)s(2)U34 to nm(5)s(2)U34, followed by the transfer of a methyl group from S-adenosyl-L-methionine to nm(5)s(2)U34, to form mnm(5)s(2)U34. The polypeptide is tRNA 5-methylaminomethyl-2-thiouridine biosynthesis bifunctional protein MnmC (Legionella pneumophila subsp. pneumophila (strain Philadelphia 1 / ATCC 33152 / DSM 7513)).